The chain runs to 374 residues: Chaperone protein DnaJ (374 aa).

Residues Cys-5–Gly-70 form the J domain. A CR-type zinc finger spans residues Gly-130–Gln-207. Residues Cys-143, Cys-146, Cys-159, Cys-162, Cys-181, Cys-184, Cys-195, and Cys-198 each coordinate Zn(2+). CXXCXGXG motif repeat units follow at residues Cys-143 to Gly-150, Cys-159 to Gly-166, Cys-181 to Gly-188, and Cys-195 to Gly-202.

Belongs to the DnaJ family. As to quaternary structure, homodimer. It depends on Zn(2+) as a cofactor.

Its subcellular location is the cytoplasm. Participates actively in the response to hyperosmotic and heat shock by preventing the aggregation of stress-denatured proteins and by disaggregating proteins, also in an autonomous, DnaK-independent fashion. Unfolded proteins bind initially to DnaJ; upon interaction with the DnaJ-bound protein, DnaK hydrolyzes its bound ATP, resulting in the formation of a stable complex. GrpE releases ADP from DnaK; ATP binding to DnaK triggers the release of the substrate protein, thus completing the reaction cycle. Several rounds of ATP-dependent interactions between DnaJ, DnaK and GrpE are required for fully efficient folding. Also involved, together with DnaK and GrpE, in the DNA replication of plasmids through activation of initiation proteins. The sequence is that of Chaperone protein DnaJ from Francisella tularensis subsp. tularensis (strain FSC 198).